Consider the following 267-residue polypeptide: Sulfur carrier protein FdhD (267 aa).

The Cysteine persulfide intermediate role is filled by Cys108.

It belongs to the FdhD family.

It is found in the cytoplasm. Required for formate dehydrogenase (FDH) activity. Acts as a sulfur carrier protein that transfers sulfur from IscS to the molybdenum cofactor prior to its insertion into FDH. The chain is Sulfur carrier protein FdhD from Shouchella clausii (strain KSM-K16) (Alkalihalobacillus clausii).